Here is a 536-residue protein sequence, read N- to C-terminus: Serine protease inhibitor 28Dc (536 aa).

The first 16 residues, 1 to 16 (MWRLLLALLLVSSVCC), serve as a signal peptide directing secretion. An N-linked (GlcNAc...) asparagine glycan is attached at Asn355.

This sequence belongs to the serpin family.

Its subcellular location is the secreted. Functionally, serine protease inhibitor which is required for pupal viability and plays an essential role in regulating the melanization reaction. Inhibits spontaneous melanization and appears to be involved in the melanization immune response to physical wounding in larvae and adults. Acts by negatively regulating the Hayan-phenoloxidase (PPO1) cascade in the hemolymph and possibly the trachea. May function by controlling the initial release of the activated form of PPO1, phenoloxidase (PO) and thus maintains PO availability for processes such as wound response and pigmentation. This chain is Serine protease inhibitor 28Dc, found in Drosophila melanogaster (Fruit fly).